The chain runs to 492 residues: 2,3-bisphosphoglycerate-independent phosphoglycerate mutase (492 aa).

Mn(2+)-binding residues include Asp11 and Ser61. The active-site Phosphoserine intermediate is Ser61. Substrate-binding positions include His118, 147-148, Arg178, Arg184, 248-251, and Lys320; these read RD and RNDR. Residues Asp386, His390, Asp427, His428, and His445 each contribute to the Mn(2+) site.

It belongs to the BPG-independent phosphoglycerate mutase family. In terms of assembly, monomer. Requires Mn(2+) as cofactor.

The catalysed reaction is (2R)-2-phosphoglycerate = (2R)-3-phosphoglycerate. Its pathway is carbohydrate degradation; glycolysis; pyruvate from D-glyceraldehyde 3-phosphate: step 3/5. Catalyzes the interconversion of 2-phosphoglycerate and 3-phosphoglycerate. This is 2,3-bisphosphoglycerate-independent phosphoglycerate mutase from Campylobacter jejuni subsp. jejuni serotype O:6 (strain 81116 / NCTC 11828).